Consider the following 79-residue polypeptide: Short neurotoxin 4 (79 aa).

The signal sequence occupies residues 1 to 21; the sequence is MKTLLLTLVMVTIMCLDLGYT. Intrachain disulfides connect Cys-24-Cys-41, Cys-34-Cys-59, and Cys-63-Cys-71.

This sequence belongs to the three-finger toxin family. Short-chain subfamily. Type III alpha-neurotoxin sub-subfamily. Expressed by the venom gland.

It is found in the secreted. Functionally, binds with high affinity to muscle nicotinic acetylcholine receptor (nAChR) and hinders acetylcholine binding to the receptor, thereby impairing neuromuscular transmission. Causes muscle paralysis, spasms and increased respiration. The sequence is that of Short neurotoxin 4 from Pseudonaja textilis (Eastern brown snake).